The chain runs to 769 residues: Protein lethal(2)denticleless (769 aa).

6 WD repeats span residues 99-129 (CHFN…RLWE), 143-174 (GHTR…LIWD), 194-249 (GHTG…KVWD), 264-303 (RHKL…YCYN), 320-349 (NSTF…YIWN), and 362-393 (GHTV…KIWR). The segment at 196–221 (TGGPGTPVSQRKQRTRTPKMAGGTTS) is disordered. Thr-201 carries the phosphothreonine modification. Residue Ser-204 is modified to Phosphoserine. Disordered regions lie at residues 448-467 (RLMD…TTKR), 476-562 (AGQE…HVYT), and 655-769 (SPRL…VGSD). A Phosphothreonine modification is found at Thr-456. Ser-459 carries the post-translational modification Phosphoserine. Residues 503 to 518 (PSSQETACRHIQLQSI) show a composition bias toward polar residues. Residue Ser-524 is modified to Phosphoserine. The span at 524–533 (SPSKRQKENS) shows a compositional bias: basic and acidic residues. Residues 546 to 562 (STPSHSPLSENVNHVYT) are compositionally biased toward polar residues. Position 655 is a phosphoserine (Ser-655). A compositionally biased stretch (polar residues) spans 657–666 (RLQSLRQSEC). Phosphoserine is present on residues Ser-679, Ser-691, and Ser-711. The segment covering 689–704 (AGSSSHSHSQSQPKTP) has biased composition (low complexity). Over residues 705–714 (TSSRRNSETT) the composition is skewed to polar residues. Residues 728–743 (PAEETTTTNAAPSSSD) are compositionally biased toward low complexity. Residues 758–769 (SMRTPTTAVGSD) show a composition bias toward polar residues.

This sequence belongs to the WD repeat cdt2 family. Component of the DCX(DTL) E3 ubiquitin ligase complex, at least composed of Cul-4, pic/DDB1, l(2)dtl/CDT2 and Roc1a. Ubiquitously expressed during embryogenesis with no sign of tissue specificity in expression up to stage 17.

The protein localises to the cytoplasm. It participates in protein modification; protein ubiquitination. In terms of biological role, substrate-specific adapter of a DCX (DDB1-CUL4-X-box) E3 ubiquitin-protein ligase complex required for cell cycle control. The DCX(DTL) complex, also named CRL4(CDT2) complex, mediates the polyubiquitination and subsequent degradation of E2f during S phase. E2f degradation is necessary to ensure proper development. Substrates require their interaction with PCNA for their polyubiquitination: substrates interact with PCNA via their PIP-box, leading to recruit the DCX(DTL) complex. The protein is Protein lethal(2)denticleless (l(2)dtl) of Drosophila melanogaster (Fruit fly).